The sequence spans 584 residues: Pectinesterase 3 (584 aa).

A signal peptide spans M1–G50. Positions V51–Q266 are excised as a propeptide. N-linked (GlcNAc...) asparagine glycosylation is found at N108, N129, and N226. T348 and Q378 together coordinate substrate. The Proton donor role is filled by D401. C415 and C435 form a disulfide bridge. Residue D422 is the Nucleophile of the active site. Positions 490 and 492 each coordinate substrate.

In the N-terminal section; belongs to the PMEI family. This sequence in the C-terminal section; belongs to the pectinesterase family. In the peel, expression is localized to the region of the flavedo close to the oil glands, and to the innermost layer of the albedo. In the lamella, expression is localized to the cell layers opposing the fruit tissue, and to the parenchyma surrounding the vascular tissue. In the fruit vesicles, expression is restricted to the peripheral cell layers and stalk cells. High levels of expression are detected in the core matrix.

The protein resides in the secreted. It localises to the cell wall. It carries out the reaction [(1-&gt;4)-alpha-D-galacturonosyl methyl ester](n) + n H2O = [(1-&gt;4)-alpha-D-galacturonosyl](n) + n methanol + n H(+). Its pathway is glycan metabolism; pectin degradation; 2-dehydro-3-deoxy-D-gluconate from pectin: step 1/5. Its function is as follows. Acts in the modification of cell walls via demethylesterification of cell wall pectin. The polypeptide is Pectinesterase 3 (Citrus sinensis (Sweet orange)).